Reading from the N-terminus, the 119-residue chain is Auxin-responsive protein SAUR78 (119 aa).

It belongs to the ARG7 family.

Functionally, may be involved in the regulation of ethylene receptor signaling. Promotes cell expansion and plant growth. This Arabidopsis thaliana (Mouse-ear cress) protein is Auxin-responsive protein SAUR78.